Here is a 143-residue protein sequence, read N- to C-terminus: Small ribosomal subunit protein bS6 (143 aa).

The segment at 98-143 (TEQSLIMKSKDEKGDKPERSERRRRDDEEGEAPAANDNDGDNAEAA) is disordered. Positions 105–124 (KSKDEKGDKPERSERRRRDD) are enriched in basic and acidic residues.

Belongs to the bacterial ribosomal protein bS6 family.

Its function is as follows. Binds together with bS18 to 16S ribosomal RNA. This Xanthomonas euvesicatoria pv. vesicatoria (strain 85-10) (Xanthomonas campestris pv. vesicatoria) protein is Small ribosomal subunit protein bS6.